Reading from the N-terminus, the 453-residue chain is Ribosomal protein uS12 methylthiotransferase RimO (453 aa).

Residues 5–120 (PKVGFVSLGC…VMQAVHSHLP (116 aa)) form the MTTase N-terminal domain. The [4Fe-4S] cluster site is built by Cys-14, Cys-50, Cys-79, Cys-151, Cys-155, and Cys-158. Residues 137 to 382 (LTPRHYAYLK…MEVAEEVSAN (246 aa)) enclose the Radical SAM core domain. The region spanning 385-453 (QRKVGKTLKV…ADGHDLWGEV (69 aa)) is the TRAM domain.

It belongs to the methylthiotransferase family. RimO subfamily. It depends on [4Fe-4S] cluster as a cofactor.

The protein localises to the cytoplasm. The catalysed reaction is L-aspartate(89)-[ribosomal protein uS12]-hydrogen + (sulfur carrier)-SH + AH2 + 2 S-adenosyl-L-methionine = 3-methylsulfanyl-L-aspartate(89)-[ribosomal protein uS12]-hydrogen + (sulfur carrier)-H + 5'-deoxyadenosine + L-methionine + A + S-adenosyl-L-homocysteine + 2 H(+). Functionally, catalyzes the methylthiolation of an aspartic acid residue of ribosomal protein uS12. The sequence is that of Ribosomal protein uS12 methylthiotransferase RimO from Burkholderia lata (strain ATCC 17760 / DSM 23089 / LMG 22485 / NCIMB 9086 / R18194 / 383).